Here is a 134-residue protein sequence, read N- to C-terminus: Retinoid-binding protein 7 (134 aa).

This sequence belongs to the calycin superfamily. Fatty-acid binding protein (FABP) family. As to expression, highly expressed in white adipose tissue and mammary gland.

The protein localises to the cytoplasm. Its function is as follows. Intracellular transport of retinol. This Mus musculus (Mouse) protein is Retinoid-binding protein 7 (Rbp7).